The following is a 341-amino-acid chain: 33 kDa chaperonin (341 aa).

Disulfide bonds link Cys-245/Cys-247 and Cys-278/Cys-281.

This sequence belongs to the HSP33 family. Post-translationally, under oxidizing conditions two disulfide bonds are formed involving the reactive cysteines. Under reducing conditions zinc is bound to the reactive cysteines and the protein is inactive.

The protein localises to the cytoplasm. Its function is as follows. Redox regulated molecular chaperone. Protects both thermally unfolding and oxidatively damaged proteins from irreversible aggregation. Plays an important role in the bacterial defense system toward oxidative stress. The protein is 33 kDa chaperonin of Thermus thermophilus (strain ATCC BAA-163 / DSM 7039 / HB27).